Here is a 142-residue protein sequence, read N- to C-terminus: uncharacterized protein (142 aa).

The segment covering 1-14 (MKNVSPRRNKHYKS) has biased composition (basic residues). The tract at residues 1 to 40 (MKNVSPRRNKHYKSYKPQVPLKKPVLLPQHPPYRNRRKKK) is disordered. Residues 16-28 (KPQVPLKKPVLLP) show a composition bias toward low complexity.

This is an uncharacterized protein from Aquifex aeolicus (strain VF5).